The sequence spans 629 residues: Forkhead box protein O (629 aa).

Threonine 49 carries the phosphothreonine; by PKB/AKT1 modification. Phosphoserine is present on serine 78. The fork-head DNA-binding region spans 98–204 (WGNLSYADLI…ETSRYEKRRG (107 aa)). Disordered regions lie at residues 185 to 208 (KSVR…RAKK), 220 to 274 (GLND…SPIR), 321 to 368 (QQQF…QTLQ), 394 to 417 (SPNS…DSLN), and 563 to 597 (QHLQ…NSSL). Serine 193 carries the phosphoserine; by PKB/AKT1 modification. 2 stretches are compositionally biased toward polar residues: residues 224-233 (ATPSPSSSVS) and 259-268 (RASSNASSCG). Phosphoserine; by PKB/AKT1 is present on serine 262. Phosphoserine is present on residues serine 265, serine 266, and serine 271. Pro residues predominate over residues 332–341 (SQPPPPPYQP). Low complexity predominate over residues 342-356 (PQLQQQQQQQPSYSL). The span at 394–403 (SPNSVTTTMS) shows a compositional bias: polar residues.

As to quaternary structure, interacts with melt.

Its subcellular location is the cytoplasm. It localises to the nucleus. Its function is as follows. Transcription factor involved in the regulation of the insulin signaling pathway. Consistently activates both the downstream target Thor\d4EBP and the feedback control target InR. Involved in negative regulation of the cell cycle, modulating cell growth and proliferation. In response to cellular stresses, such as nutrient deprivation or increased levels of reactive oxygen species, foxo is activated and inhibits growth through the action of target genes such as Thor. Foxo activated in the adult fat body can regulate lifespan in adults; an insulin peptide itself may function as one secondary messenger of insulin-regulated aging. Also regulates Lip4, homolog of human acid lipases, thereby acting as a key modulator of lipid metabolism by insulin signaling and integrates insulin responses to glucose and lipid homeostasis. The sequence is that of Forkhead box protein O from Drosophila persimilis (Fruit fly).